The sequence spans 466 residues: Cysteine--tRNA ligase (466 aa).

Residue Cys-29 coordinates Zn(2+). Residues 31 to 41 carry the 'HIGH' region motif; the sequence is PTVYNYIHIGN. Residues Cys-209, His-234, and Glu-238 each contribute to the Zn(2+) site. The 'KMSKS' region motif lies at 266-270; sequence KMSKS. Lys-269 contributes to the ATP binding site.

This sequence belongs to the class-I aminoacyl-tRNA synthetase family. Monomer. It depends on Zn(2+) as a cofactor.

The protein resides in the cytoplasm. The catalysed reaction is tRNA(Cys) + L-cysteine + ATP = L-cysteinyl-tRNA(Cys) + AMP + diphosphate. In Lysinibacillus sphaericus (strain C3-41), this protein is Cysteine--tRNA ligase.